The sequence spans 133 residues: uncharacterized protein (133 aa).

The signal sequence occupies residues 1–22; sequence MYRSSISIQVFICVLFLPLDSG. Residue N111 is glycosylated (N-linked (GlcNAc...) asparagine).

The protein localises to the secreted. This is an uncharacterized protein from Saccharomyces cerevisiae (strain ATCC 204508 / S288c) (Baker's yeast).